The following is a 212-amino-acid chain: External core antigen (212 aa).

A signal peptide spans 1–19 (MQLFHLCLIISCSCPTVQA). The interval 25-27 (GWL) is HBEAG. Residues 179 to 212 (RQRGRTIRRRTPSPRRRRSQSPRRRRSQSRESQC) form a disordered region. Positions 180–205 (QRGRTIRRRTPSPRRRRSQSPRRRRS) are enriched in basic residues. One copy of the 1; half-length repeat lies at 184–190 (TIRRRTP). The tract at residues 184–206 (TIRRRTPSPRRRRSQSPRRRRSQ) is 3 X 8 AA repeats of S-P-R-R-R-R-S-Q. A propeptide spanning residues 184–212 (TIRRRTPSPRRRRSQSPRRRRSQSRESQC) is cleaved from the precursor. Tandem repeats lie at residues 191–198 (SPRRRRSQ) and 199–206 (SPRRRRSQ).

This sequence belongs to the orthohepadnavirus precore antigen family. Homodimerizes. In terms of processing, phosphorylated. Cleaved by host furin.

Its subcellular location is the secreted. It is found in the host nucleus. May regulate immune response to the intracellular capsid in acting as a T-cell tolerogen, by having an immunoregulatory effect which prevents destruction of infected cells by cytotoxic T-cells. This immune regulation may predispose to chronicity during perinatal infections and prevent severe liver injury during adult infections. This chain is External core antigen, found in Hepatitis B virus genotype D subtype ayw (isolate Australia/AustKW/1991) (HBV-D).